We begin with the raw amino-acid sequence, 183 residues long: Translocon-associated protein subunit beta (183 aa).

The first 17 residues, 1 to 17, serve as a signal peptide directing secretion; sequence MRLLAVVVLALLAVSQA. Residues 18 to 146 are Lumenal-facing; that stretch reads EEGARLLASK…REFDRRFSPH (129 aa). The N-linked (GlcNAc...) (high mannose) asparagine glycan is linked to Asn-88. Residue Asn-104 is glycosylated (N-linked (GlcNAc...) asparagine). A helical membrane pass occupies residues 147–167; it reads FLDWAAFGVMTLPSIGIPLLL. Residues 168-183 are Cytoplasmic-facing; it reads WYSSKRKYDTPKPKKN.

The protein belongs to the TRAP-beta family. Heterotetramer of TRAP-alpha, TRAP-beta, TRAP-delta and TRAP-gamma. Interacts with STING1.

It is found in the endoplasmic reticulum membrane. TRAP proteins are part of a complex whose function is to bind calcium to the ER membrane and thereby regulate the retention of ER resident proteins. The sequence is that of Translocon-associated protein subunit beta (Ssr2) from Mus musculus (Mouse).